The primary structure comprises 284 residues: Tryptophan synthase alpha chain (284 aa).

Active-site proton acceptor residues include E55 and D66.

The protein belongs to the TrpA family. Tetramer of two alpha and two beta chains.

The enzyme catalyses (1S,2R)-1-C-(indol-3-yl)glycerol 3-phosphate + L-serine = D-glyceraldehyde 3-phosphate + L-tryptophan + H2O. Its pathway is amino-acid biosynthesis; L-tryptophan biosynthesis; L-tryptophan from chorismate: step 5/5. Its function is as follows. The alpha subunit is responsible for the aldol cleavage of indoleglycerol phosphate to indole and glyceraldehyde 3-phosphate. The protein is Tryptophan synthase alpha chain of Methanococcus voltae.